The sequence spans 459 residues: Bifunctional protein GlmU (459 aa).

The interval 1–230 is pyrophosphorylase; sequence MSNRFAVILA…FDETLGVNDR (230 aa). UDP-N-acetyl-alpha-D-glucosamine contacts are provided by residues 9 to 12, Lys23, Gln73, and 78 to 79; these read LAAG and GT. Asp103 lines the Mg(2+) pocket. Residues Gly140, Glu155, Asn170, and Asn228 each contribute to the UDP-N-acetyl-alpha-D-glucosamine site. Asn228 contributes to the Mg(2+) binding site. The linker stretch occupies residues 231-251; the sequence is VALSQAEIIMKNRINRKNMVN. Residues 252–459 are N-acetyltransferase; the sequence is GVTIIDPSNT…VDQLLNKKKS (208 aa). UDP-N-acetyl-alpha-D-glucosamine contacts are provided by Arg333 and Lys351. His363 functions as the Proton acceptor in the catalytic mechanism. Residues Tyr366 and Asn377 each contribute to the UDP-N-acetyl-alpha-D-glucosamine site. Acetyl-CoA-binding positions include 386–387, Ala423, and Arg440; that span reads NY.

It in the N-terminal section; belongs to the N-acetylglucosamine-1-phosphate uridyltransferase family. This sequence in the C-terminal section; belongs to the transferase hexapeptide repeat family. As to quaternary structure, homotrimer. Mg(2+) is required as a cofactor.

It localises to the cytoplasm. It carries out the reaction alpha-D-glucosamine 1-phosphate + acetyl-CoA = N-acetyl-alpha-D-glucosamine 1-phosphate + CoA + H(+). The enzyme catalyses N-acetyl-alpha-D-glucosamine 1-phosphate + UTP + H(+) = UDP-N-acetyl-alpha-D-glucosamine + diphosphate. It participates in nucleotide-sugar biosynthesis; UDP-N-acetyl-alpha-D-glucosamine biosynthesis; N-acetyl-alpha-D-glucosamine 1-phosphate from alpha-D-glucosamine 6-phosphate (route II): step 2/2. Its pathway is nucleotide-sugar biosynthesis; UDP-N-acetyl-alpha-D-glucosamine biosynthesis; UDP-N-acetyl-alpha-D-glucosamine from N-acetyl-alpha-D-glucosamine 1-phosphate: step 1/1. The protein operates within bacterial outer membrane biogenesis; LPS lipid A biosynthesis. Catalyzes the last two sequential reactions in the de novo biosynthetic pathway for UDP-N-acetylglucosamine (UDP-GlcNAc). The C-terminal domain catalyzes the transfer of acetyl group from acetyl coenzyme A to glucosamine-1-phosphate (GlcN-1-P) to produce N-acetylglucosamine-1-phosphate (GlcNAc-1-P), which is converted into UDP-GlcNAc by the transfer of uridine 5-monophosphate (from uridine 5-triphosphate), a reaction catalyzed by the N-terminal domain. The sequence is that of Bifunctional protein GlmU from Bacillus anthracis (strain A0248).